A 415-amino-acid polypeptide reads, in one-letter code: Mitogen-activated protein kinase kinae MST7 (415 aa).

Positions 1 to 37 (MADPFAPRTMKRRNVKGLALTPAAPKPPPTAENAPIH) are disordered. Residues 61 to 326 (LEVIKDLGSG…EELFERDPFV (266 aa)) enclose the Protein kinase domain. ATP contacts are provided by residues 67–75 (LGSGNGGTV) and K90. Positions 363–409 (DLLRSSDSPTATYHGDDRPLETPTSAYRVDPRRGPAEGSAGLADQVD) are disordered.

The protein belongs to the protein kinase superfamily. STE Ser/Thr protein kinase family. MAP kinase kinase subfamily. Homodimer. Interacts with the adapter protein MST50. Interacts with TRX2.

It carries out the reaction L-seryl-[protein] + ATP = O-phospho-L-seryl-[protein] + ADP + H(+). It catalyses the reaction L-threonyl-[protein] + ATP = O-phospho-L-threonyl-[protein] + ADP + H(+). In terms of biological role, mitogen-activated protein kinase kinase; part of the MST11-MST7-PMK1 MAP kinase (MAPK) cascade that is essential for appressorium formation, penetration and invasive growth. The MST11-MST7-PMK1 MAP kinase cascade transduces signals from the cell surface sensors MDB2 and SHO1 that recognize various surface signals such as surface hydrophobicity, cutin monomers, and rice leaf waxes. MST7 acts as the upstream MAPKK that directly phosphorylates MAP kinase PMK1. This is Mitogen-activated protein kinase kinae MST7 from Pyricularia oryzae (strain 70-15 / ATCC MYA-4617 / FGSC 8958) (Rice blast fungus).